A 720-amino-acid polypeptide reads, in one-letter code: Beta-glucan synthesis-associated protein KRE6 (720 aa).

Polar residues-rich tracts occupy residues 1–17 (MPLRNLTETHNFSSTNL), 31–51 (LSSSPSFGQQNDNSTNDNAGL), and 69–90 (SLSSSVHYQPQGSDSSLLHDNS). Residues 1 to 90 (MPLRNLTETH…SDSSLLHDNS (90 aa)) form a disordered region. Residues 1–252 (MPLRNLTETH…KYMDKRSASG (252 aa)) are Cytoplasmic-facing. Serine 81, serine 116, serine 133, serine 134, serine 136, and serine 139 each carry phosphoserine. Disordered stretches follow at residues 117–142 (TANDNSFLQPPHRAIASSPSLNSNLS) and 167–189 (QLNHHGRSPTSSPGNESSASFSS). Over residues 133–142 (SSPSLNSNLS) the composition is skewed to low complexity. Residues 253 to 273 (LAGVLLLFLAAIFIFIVLPAL) traverse the membrane as a helical; Signal-anchor for type II membrane protein segment. The Lumenal portion of the chain corresponds to 274–720 (TFTGAIDHES…CTSSKFKLSS (447 aa)). Residues 289–664 (TYLTQYQYPQ…YVRIYQPSNA (376 aa)) enclose the GH16 domain. N-linked (GlcNAc...) asparagine glycans are attached at residues asparagine 374, asparagine 461, asparagine 538, asparagine 563, and asparagine 691.

Belongs to the SKN1/KRE6 family. In terms of assembly, the cytoplasmic domain interacts with the actin patch assembly proteins LAS17 and SLA1. Interacts with KEG1.

It is found in the golgi apparatus membrane. Functionally, involved in the synthesis of (1-&gt;6)- and (1-&gt;3)-beta-D-glucan polymers of the yeast cell wall in vivo. It is required for full activity of beta-glucan synthase in vitro. May be involved in the maturation and transport of cell wall proteins (CWP) to the cell wall. May act as a transglucosidase and contribute to the construction of a protein-bound glucan-structure that acts as an acceptor site for the addition of (1-&gt;6)-beta-D-glucan at the cell surface. This Saccharomyces cerevisiae (strain ATCC 204508 / S288c) (Baker's yeast) protein is Beta-glucan synthesis-associated protein KRE6 (KRE6).